The following is a 999-amino-acid chain: uncharacterized protein (999 aa).

Positions 45–128 are enriched in low complexity; it reads NSNNIGNGNG…TPTITPSSPS (84 aa). Residues 45-129 form a disordered region; the sequence is NSNNIGNGNG…PTITPSSPSV (85 aa). Positions 723-767 form a coiled coil; that stretch reads YQQSQQQQSQQQQQQQQQQQQQQQQQQQQQQQQQQQQQQQQQQQQ. Residues 873 to 887 are compositionally biased toward low complexity; sequence NDINNANNSNNNNNN. The interval 873 to 904 is disordered; sequence NDINNANNSNNNNNNQSQVLLSPNRNKDGTLN. A helical transmembrane segment spans residues 976–996; the sequence is LFSLVLILAFIWFFFEIYFFF.

Its subcellular location is the membrane. This is an uncharacterized protein from Dictyostelium discoideum (Social amoeba).